The sequence spans 278 residues: Gamma carbonic anhydrase 2, mitochondrial (278 aa).

The transit peptide at 1–43 (MGTLGRAIYTVGNWIRGTGQALDRVGSLLQGSHRIEEHLSRHR) directs the protein to the mitochondrion. Substrate contacts are provided by residues 86-88 (RGD) and 101-102 (QD). Zn(2+) is bound by residues H107, H130, and H135. Substrate is bound at residue N209.

This sequence belongs to the gamma-class carbonic anhydrase family. Homotrimer. Component of the mitochondrial oxidoreductase respiratory chain complex I; element of the extra matrix-exposed domain, which is attached to the membrane arm of this complex. Interacts with GAMMACAL1 and GAMMACAL2. Requires Zn(2+) as cofactor. In terms of tissue distribution, constitutively expressed in roots and leaves, with higher levels in flowers, particularly in tapetal tissue of anthers, inflorescence (IM) and floral meristems (FM).

The protein localises to the mitochondrion membrane. Enzyme involved in the catabolism of H(2)CO(3) but that does not mediates the reversible hydration of carbon dioxide. Mediates complex I assembly in mitochondria and respiration. Binds HCO(3)-. Required for male fertility during anther development and dehiscence to regulate the secondary thickenings of the endothecial cell wall, probably by modulating H(2)O(2)-dependent lignin polymerization. The protein is Gamma carbonic anhydrase 2, mitochondrial (GAMMACA2) of Arabidopsis thaliana (Mouse-ear cress).